The sequence spans 257 residues: Major prion protein (257 aa).

The signal sequence occupies residues 1-24 (MVKSHIGGWILVLFVAAWSDIGLC). The interaction with GRB2, ERI3 and SYN1 stretch occupies residues 25 to 234 (KKRPKPGGGW…EYEAYAQRGA (210 aa)). Residues 28 to 113 (PKPGGGWNTG…NKPSKPKTNM (86 aa)) form a disordered region. 5 repeat units span residues 54–62 (PQGGGGWGQ), 63–70 (PHGGGWGQ), 71–78 (PHGGGWGQ), 79–86 (PHGGGWGQ), and 87–95 (PHGGGGWGQ). Residues 54-95 (PQGGGGWGQPHGGGWGQPHGGGWGQPHGGGWGQPHGGGGWGQ) form a 5 X 8 AA tandem repeats of P-H-G-G-G-W-G-Q region. The segment covering 55 to 100 (QGGGGWGQPHGGGWGQPHGGGWGQPHGGGWGQPHGGGGWGQGGGSH) has biased composition (gly residues). His-64, Gly-65, Gly-66, His-72, Gly-73, Gly-74, His-80, Gly-81, Gly-82, His-88, Gly-90, and Gly-91 together coordinate Cu(2+). The cysteines at positions 183 and 218 are disulfide-linked. Residues Asn-185 and Asn-201 are each glycosylated (N-linked (GlcNAc...) asparagine). Ala-234 is lipidated: GPI-anchor amidated alanine. Residues 235–257 (SVILFSSPPVILLISFLLFLIVG) constitute a propeptide, removed in mature form.

Belongs to the prion family. In terms of assembly, monomer and homodimer. Has a tendency to aggregate into amyloid fibrils containing a cross-beta spine, formed by a steric zipper of superposed beta-strands. Soluble oligomers may represent an intermediate stage on the path to fibril formation. Copper binding may promote oligomerization. Interacts with GRB2, APP, ERI3/PRNPIP and SYN1. Mislocalized cytosolically exposed PrP interacts with MGRN1; this interaction alters MGRN1 subcellular location and causes lysosomal enlargement. Interacts with KIAA1191.

The protein resides in the cell membrane. It is found in the golgi apparatus. Its function is as follows. Its primary physiological function is unclear. Has cytoprotective activity against internal or environmental stresses. May play a role in neuronal development and synaptic plasticity. May be required for neuronal myelin sheath maintenance. May play a role in iron uptake and iron homeostasis. Soluble oligomers are toxic to cultured neuroblastoma cells and induce apoptosis (in vitro). Association with GPC1 (via its heparan sulfate chains) targets PRNP to lipid rafts. Also provides Cu(2+) or Zn(2+) for the ascorbate-mediated GPC1 deaminase degradation of its heparan sulfate side chains. This chain is Major prion protein (PRNP), found in Sus scrofa (Pig).